The chain runs to 101 residues: MSRRCELTGKAVQVGHLVSHSNRKTKCRFLPNLCNVTLQSDTLNRRVRLRVTAHALRSVEHRGGLDAFLVKAREIELSQTARLLKREIEKKIAEPATPAAA.

Belongs to the bacterial ribosomal protein bL28 family.

This is Large ribosomal subunit protein bL28 from Methylorubrum extorquens (strain CM4 / NCIMB 13688) (Methylobacterium extorquens).